Here is a 261-residue protein sequence, read N- to C-terminus: Urease accessory protein UreD (261 aa).

Belongs to the UreD family. UreD, UreF and UreG form a complex that acts as a GTP-hydrolysis-dependent molecular chaperone, activating the urease apoprotein by helping to assemble the nickel containing metallocenter of UreC. The UreE protein probably delivers the nickel.

Its subcellular location is the cytoplasm. Functionally, required for maturation of urease via the functional incorporation of the urease nickel metallocenter. The protein is Urease accessory protein UreD of Haemophilus influenzae (strain ATCC 51907 / DSM 11121 / KW20 / Rd).